Here is a 183-residue protein sequence, read N- to C-terminus: uncharacterized protein (183 aa).

The Macro domain maps to 1-182 (MIKVVKGDIT…KALKIVGQGG (182 aa)).

This is an uncharacterized protein from Pyrococcus furiosus (strain ATCC 43587 / DSM 3638 / JCM 8422 / Vc1).